The primary structure comprises 451 residues: tRNA modification GTPase MnmE (451 aa).

(6S)-5-formyl-5,6,7,8-tetrahydrofolate is bound by residues Arg-37, Glu-95, and Lys-135. One can recognise a TrmE-type G domain in the interval 232 to 376 (GLSIVIMGPP…LVEAIADFAG (145 aa)). A K(+)-binding site is contributed by Asn-242. GTP contacts are provided by residues 242–247 (NAGKST), 261–267 (SEIAGTT), and 286–289 (DTAG). Ser-246 contributes to the Mg(2+) binding site. K(+) contacts are provided by Ser-261, Ile-263, and Thr-266. Thr-267 provides a ligand contact to Mg(2+). (6S)-5-formyl-5,6,7,8-tetrahydrofolate is bound at residue Lys-451.

It belongs to the TRAFAC class TrmE-Era-EngA-EngB-Septin-like GTPase superfamily. TrmE GTPase family. In terms of assembly, homodimer. Heterotetramer of two MnmE and two MnmG subunits. Requires K(+) as cofactor.

It localises to the cytoplasm. Exhibits a very high intrinsic GTPase hydrolysis rate. Involved in the addition of a carboxymethylaminomethyl (cmnm) group at the wobble position (U34) of certain tRNAs, forming tRNA-cmnm(5)s(2)U34. In Beijerinckia indica subsp. indica (strain ATCC 9039 / DSM 1715 / NCIMB 8712), this protein is tRNA modification GTPase MnmE.